Reading from the N-terminus, the 143-residue chain is Ribosome-binding factor A (143 aa).

The segment at 117–143 (DAEIARRSQGAMPAGEADPYRHSDEEE) is disordered. Positions 134-143 (DPYRHSDEEE) are enriched in basic and acidic residues.

This sequence belongs to the RbfA family. In terms of assembly, monomer. Binds 30S ribosomal subunits, but not 50S ribosomal subunits or 70S ribosomes.

It is found in the cytoplasm. One of several proteins that assist in the late maturation steps of the functional core of the 30S ribosomal subunit. Associates with free 30S ribosomal subunits (but not with 30S subunits that are part of 70S ribosomes or polysomes). Required for efficient processing of 16S rRNA. May interact with the 5'-terminal helix region of 16S rRNA. The protein is Ribosome-binding factor A of Cutibacterium acnes (strain DSM 16379 / KPA171202) (Propionibacterium acnes).